Consider the following 142-residue polypeptide: UPF0102 protein Synpcc7942_0312 (142 aa).

This sequence belongs to the UPF0102 family.

In Synechococcus elongatus (strain ATCC 33912 / PCC 7942 / FACHB-805) (Anacystis nidulans R2), this protein is UPF0102 protein Synpcc7942_0312.